We begin with the raw amino-acid sequence, 267 residues long: Multivesicular body subunit 12A (267 aa).

The region spanning 7-146 is the MABP domain; that stretch reads AAPLSGVGWA…SFAIWCKKGA (140 aa). Residues 154-159 carry the SH3-binding motif; it reads PVPKPR. The UMA domain occupies 210–259; sequence MDGVPFTLHPKFERSPKSDSSAILTDLTVKSLADIEKEYNYTFVVERTAA.

It belongs to the MVB12 family. In terms of assembly, component of the ESCRT-I complex (endosomal sorting complex required for transport I).

The protein localises to the cytoplasm. The protein resides in the endosome. Its subcellular location is the late endosome membrane. Its function is as follows. Component of the ESCRT-I complex, a regulator of vesicular trafficking process. Required for the sorting of endocytic ubiquitinated cargos into multivesicular bodies. This is Multivesicular body subunit 12A (MVB12A) from Gallus gallus (Chicken).